We begin with the raw amino-acid sequence, 553 residues long: Putative polyamine transporter (553 aa).

Transmembrane regions (helical) follow at residues 43–63 (WSIF…AACF), 68–88 (LVVG…TSVA), 133–153 (ITAA…LHSF), 163–183 (AQIF…ACFP), 190–210 (FSSA…IMIL), 240–260 (WPTG…MSGY), 280–300 (AIVL…IAIA), 333–353 (VIGA…NCLL), 397–417 (LLLL…SIGA), 453–473 (IGWV…FPTV), and 485–505 (WTCL…VVYA).

Belongs to the amino acid-polyamine-organocation (APC) superfamily.

The protein localises to the membrane. This is Putative polyamine transporter (GPT1) from Candida albicans (Yeast).